The chain runs to 197 residues: dITP/XTP pyrophosphatase (197 aa).

7–12 (TGNEQK) contacts substrate. Mg(2+) is bound by residues Glu-44 and Asp-73. The active-site Proton acceptor is Asp-73. Residues Thr-74, 156-159 (FGYD), Lys-179, and 184-185 (HR) each bind substrate.

Belongs to the HAM1 NTPase family. In terms of assembly, homodimer. The cofactor is Mg(2+).

The catalysed reaction is XTP + H2O = XMP + diphosphate + H(+). It carries out the reaction dITP + H2O = dIMP + diphosphate + H(+). It catalyses the reaction ITP + H2O = IMP + diphosphate + H(+). Pyrophosphatase that catalyzes the hydrolysis of nucleoside triphosphates to their monophosphate derivatives, with a high preference for the non-canonical purine nucleotides XTP (xanthosine triphosphate), dITP (deoxyinosine triphosphate) and ITP. Seems to function as a house-cleaning enzyme that removes non-canonical purine nucleotides from the nucleotide pool, thus preventing their incorporation into DNA/RNA and avoiding chromosomal lesions. This Elusimicrobium minutum (strain Pei191) protein is dITP/XTP pyrophosphatase.